The following is a 705-amino-acid chain: Dynein axonemal intermediate chain 1 (705 aa).

Disordered stretches follow at residues 1–44 (MPSK…AVRP) and 122–169 (AGSQ…DVPA). S124 and S127 each carry phosphoserine. A compositionally biased stretch (polar residues) spans 124 to 135 (SQESVKVVTSDT). Residues 136-159 (EILEEEEEPKEGEGEGEGEAEGEA) show a composition bias toward acidic residues. 5 WD repeats span residues 386-426 (SSES…SQPC), 435-478 (KHTD…LVHI), 543-583 (AHNM…PMFI), 585-625 (DLNA…YEAI), and 633-672 (KKKNKITHVQFNPIHPIIIVGDDRGHITCLKLSPNLRKMP).

This sequence belongs to the dynein intermediate chain family. In terms of assembly, consists of at least two heavy chains and a number of intermediate and light chains. Interacts with BICD2. Interacts with CFAP45 and CFAP52. Interacts with CFAP53.

The protein localises to the cytoplasm. The protein resides in the cytoskeleton. It localises to the cilium axoneme. Its function is as follows. Part of the dynein complex of respiratory cilia. The sequence is that of Dynein axonemal intermediate chain 1 (Dnai1) from Rattus norvegicus (Rat).